We begin with the raw amino-acid sequence, 265 residues long: Neuronal membrane glycoprotein M6-b (265 aa).

A helical transmembrane segment spans residues 31–51; the sequence is GGVPYASLVATILCFSGVALF. An N-linked (GlcNAc...) asparagine glycan is attached at asparagine 73. Transmembrane regions (helical) follow at residues 90–110 and 136–156; these read VIYGIASFFFLYGIILLAEGF and FVFLTYVLGVAWLGVFGFSAV. N-linked (GlcNAc...) asparagine glycosylation is present at asparagine 177. Residues 224–244 traverse the membrane as a helical segment; sequence LFIVACAGAGATVIALLIYMM. The residue at position 257 (serine 257) is a Phosphoserine.

It belongs to the myelin proteolipid protein family. As to quaternary structure, interacts with SERT. Neurons and glia; cerebellar Bergmann glia, in glia within white matter tracts of the cerebellum and cerebrum, and in embryonic dorsal root ganglia.

The protein resides in the cell membrane. May be involved in neural development. Involved in regulation of osteoblast function and bone formation. Involved in matrix vesicle release by osteoblasts; this function seems to involve maintenance of the actin cytoskeleton. May be involved in cellular trafficking of SERT and thereby in regulation of serotonin uptake. The sequence is that of Neuronal membrane glycoprotein M6-b (GPM6B) from Homo sapiens (Human).